We begin with the raw amino-acid sequence, 111 residues long: Dynein light chain Tctex-type (111 aa).

It belongs to the dynein light chain Tctex-type family. The cytoplasmic dynein complex consists of two catalytic heavy chains (HCs) and a number of non-catalytic subunits presented by intermediate chains (ICs), light intermediate chains (LICs) and light chains (LCs).

The protein resides in the cytoplasm. Its subcellular location is the cytoskeleton. Functionally, acts as one of several non-catalytic accessory components of the cytoplasmic dynein complex that are thought to be involved in linking dynein to cargos and to adapter proteins that regulate dynein function. Cytoplasmic dynein acts as a motor for the intracellular retrograde motility of vesicles and organelles along microtubules. Required for spermatid differentiation. Is not required for polarized transport in rhabdomere development and appears to be a non-essential component of the cytoplasmic dynein complex. This chain is Dynein light chain Tctex-type (Dlc90F), found in Drosophila melanogaster (Fruit fly).